Here is a 1038-residue protein sequence, read N- to C-terminus: Zinc finger protein 628 (1038 aa).

Positions 1–31 (MAGSHVDMAPASTTEGTGEKPGPTAPAPTPA) are disordered. The segment covering 13-22 (TTEGTGEKPG) has biased composition (low complexity). 6 consecutive C2H2-type zinc fingers follow at residues 34-56 (YECG…QRTH), 62-84 (YKCP…QRGH), 90-112 (YQCP…RSVH), 118-140 (FTCG…LRQH), 146-168 (YPCP…RHVH), and 174-196 (YTCG…QRVH). Threonine 197 bears the Phosphothreonine mark. A C2H2-type 7 zinc finger spans residues 202-224 (FRCPLCPKTFTHSSNLLLHHRTH). Disordered stretches follow at residues 220–242 (HHRT…ETSR) and 254–273 (LQPR…PPVV). 2 stretches are compositionally biased toward pro residues: residues 227 to 237 (APGPAPAPAPP) and 257 to 273 (RSPP…PPVV). C2H2-type zinc fingers lie at residues 346-368 (FACL…QHSH), 376-398 (FRCG…QQCH), 446-468 (YKCA…LRDH), 474-496 (YQCG…QRVH), 502-524 (FTCG…LRLH), 530-552 (YACT…RHVH), and 558-580 (HSCS…QRVH). Threonine 581 is subject to Phosphothreonine. C2H2-type zinc fingers lie at residues 586–608 (FRCP…QRTH) and 614–636 (FACP…LRTH). Disordered stretches follow at residues 637–661 (TPAT…LAAA) and 717–763 (PSSV…AGQG). Pro residues predominate over residues 723–733 (PTPPPPPPPPK). The segment covering 734-756 (VILLPPASAGGPGSGAARPGPRS) has biased composition (low complexity). 4 consecutive repeat copies span residues 811 to 821 (VQLQPAQEVAT), 822 to 832 (VQLQPAQEVTT), 833 to 843 (VQLQPAQEVTT), and 844 to 854 (VQLQPLTGQVS). Residues 811-854 (VQLQPAQEVATVQLQPAQEVTTVQLQPAQEVTTVQLQPLTGQVS) are 4 X 11 AA tandem repeats of VQLQP-[AL]-[QT]-[EG]-[VQ]-[ATV]-[ST]. The interaction with TAF4B stretch occupies residues 922–1038 (DGEQTRLCVQ…LPAVQLVHTF (117 aa)).

Interacts with TAF4B. As to expression, expressed widely in testis, in both germline and somatic cells. Seems to have particularly strong expression in meiotic spermatocytes, postmeiotic round spermatids and Sertoli cells. Not detected in elongating spermatids or mature sperm (at protein level). Expressed in testis, ovary, spleen, lung, brain, liver and kidney. Expressed in D3 embryonic stem cells and F9 embryonal carcinoma cells.

It localises to the nucleus. Its function is as follows. Transcriptional activator. Binds DNA on GT-box consensus sequence 5'-TTGGTT-3'. Plays a role in spermiogenesis. The sequence is that of Zinc finger protein 628 from Mus musculus (Mouse).